The primary structure comprises 140 residues: Cysteine desulfuration protein SufE (140 aa).

The active-site Cysteine persulfide intermediate is cysteine 51.

Belongs to the SufE family. Homodimer. Interacts with SufS.

It is found in the cytoplasm. Its pathway is cofactor biosynthesis; iron-sulfur cluster biosynthesis. In terms of biological role, participates in cysteine desulfuration mediated by SufS. Cysteine desulfuration mobilizes sulfur from L-cysteine to yield L-alanine and constitutes an essential step in sulfur metabolism for biosynthesis of a variety of sulfur-containing biomolecules. Functions as a sulfur acceptor for SufS, by mediating the direct transfer of the sulfur atom from the S-sulfanylcysteine of SufS, an intermediate product of cysteine desulfuration process. The protein is Cysteine desulfuration protein SufE of Yersinia pestis bv. Antiqua (strain Antiqua).